Reading from the N-terminus, the 204-residue chain is Nascent polypeptide-associated complex subunit alpha (204 aa).

Over residues 1–19 the composition is skewed to basic and acidic residues; the sequence is MADPRVEELPDEEVPKANV. 2 disordered regions span residues 1-47 and 118-167; these read MADP…IHSR and QLAA…GLEA. A compositionally biased stretch (acidic residues) spans 22–32; it reads AGSDSESEAGE. An NAC-A/B domain is found at 46-111; the sequence is SRNEKKARKA…AKIEDLNSQA (66 aa). Positions 118-128 are enriched in low complexity; that stretch reads QLAAAEAAAGE. A compositionally biased stretch (basic and acidic residues) spans 129 to 151; it reads HAGHDHDHDHGKGKAPETEAKKE. Over residues 152-164 the composition is skewed to acidic residues; it reads EEEDDGEEVDETG. The UBA domain occupies 165-204; sequence LEAKDIELVMAQANVSRKKAVKALRENDNDIVNSIMALSI.

This sequence belongs to the NAC-alpha family. Part of the nascent polypeptide-associated complex (NAC), consisting of egd2 and egd1. NAC associates with ribosomes via egd1.

It is found in the cytoplasm. The protein resides in the nucleus. Functionally, component of the nascent polypeptide-associated complex (NAC), a dynamic component of the ribosomal exit tunnel, protecting the emerging polypeptides from interaction with other cytoplasmic proteins to ensure appropriate nascent protein targeting. The NAC complex also promotes mitochondrial protein import by enhancing productive ribosome interactions with the outer mitochondrial membrane and blocks the inappropriate interaction of ribosomes translating non-secretory nascent polypeptides with translocation sites in the membrane of the endoplasmic reticulum. Egd2 may also be involved in transcription regulation. The chain is Nascent polypeptide-associated complex subunit alpha (egd2) from Aspergillus fumigatus (strain ATCC MYA-4609 / CBS 101355 / FGSC A1100 / Af293) (Neosartorya fumigata).